An 857-amino-acid chain; its full sequence is DNA mismatch repair protein MutS (857 aa).

Residue 608-615 (GPNMSGKS) participates in ATP binding.

This sequence belongs to the DNA mismatch repair MutS family.

In terms of biological role, this protein is involved in the repair of mismatches in DNA. It is possible that it carries out the mismatch recognition step. This protein has a weak ATPase activity. The chain is DNA mismatch repair protein MutS from Lactobacillus gasseri (strain ATCC 33323 / DSM 20243 / BCRC 14619 / CIP 102991 / JCM 1131 / KCTC 3163 / NCIMB 11718 / NCTC 13722 / AM63).